The following is a 359-amino-acid chain: Malonyl-CoA reductase (359 aa).

Residue 16 to 19 coordinates NADP(+); it reads TGLV. Cys-153 acts as the Acyl-thioester intermediate in catalysis. NADP(+) is bound at residue 183–184; the sequence is SG. The Proton acceptor role is filled by His-248. 335–336 is a binding site for NADP(+); that stretch reads NT.

Belongs to the aspartate-semialdehyde dehydrogenase family. Homodimer and possibly a tetramer. Mg(2+) serves as cofactor. Mn(2+) is required as a cofactor.

It carries out the reaction 3-oxopropanoate + NADP(+) + CoA = malonyl-CoA + NADPH + H(+). Activated by dithioerythritol (5 mM) and inhibited by the thiol-blocking agent iodoacetamide (0.1 mM). In terms of biological role, catalyzes the reduction of malonyl-CoA to malonate semialdehyde, a key step in the 3-hydroxypropanoate and the 3-hydroxypropanoate/4-hydroxybutyrate cycles. Can also use succinyl-CoA and succinate semialdehyde as substrates but at a lower rate than malonyl-CoA. The protein is Malonyl-CoA reductase (mcr) of Sulfurisphaera tokodaii (strain DSM 16993 / JCM 10545 / NBRC 100140 / 7) (Sulfolobus tokodaii).